Here is a 118-residue protein sequence, read N- to C-terminus: Ribonuclease P protein component (118 aa).

It belongs to the RnpA family. In terms of assembly, consists of a catalytic RNA component (M1 or rnpB) and a protein subunit.

The catalysed reaction is Endonucleolytic cleavage of RNA, removing 5'-extranucleotides from tRNA precursor.. Functionally, RNaseP catalyzes the removal of the 5'-leader sequence from pre-tRNA to produce the mature 5'-terminus. It can also cleave other RNA substrates such as 4.5S RNA. The protein component plays an auxiliary but essential role in vivo by binding to the 5'-leader sequence and broadening the substrate specificity of the ribozyme. This chain is Ribonuclease P protein component, found in Vibrio cholerae serotype O1 (strain ATCC 39541 / Classical Ogawa 395 / O395).